Here is a 27-residue protein sequence, read N- to C-terminus: Potassium channel toxin kappa-KTx 2.2 (27 aa).

Disulfide bonds link Cys3/Cys21 and Cys7/Cys17.

Belongs to the short scorpion toxin superfamily. Potassium channel inhibitor kappa-KTx family. Kappa-KTx 2 subfamily. Expressed by the venom gland.

Its subcellular location is the secreted. Functionally, omTx1 decreases the amplitude of the potassium current of the rat channels Kv1.1/KCNA1 by 17% and Kv1.2/KCNA2 by 12% as well as human Kv1.3/KCNA3 by 24%. OmTx2 decreases the amplitude of the potassium current of the rat channels Kv1.1/KCNA1 by 8% and Kv1.2/KCNA2 by 10% as well as human Kv1.3/KCNA3 by 36%. Also alters glucose-induced insulin release from pancreatic islets. The sequence is that of Potassium channel toxin kappa-KTx 2.2 from Opisthacanthus madagascariensis (Scorpion).